The chain runs to 582 residues: Zinc finger protein 614 (582 aa).

The region spanning 8-79 is the KRAB domain; the sequence is LTLEDVAVEF…VAKIQNKNCP (72 aa). Residues 202–224 form a C2H2-type 1 zinc finger; the sequence is HACIECEQTFLRKSQLIYHENIH. A C2H2-type 2; degenerate zinc finger spans residues 254-278; it reads KICIPNEYRKGSTVNSRLIAHQQTH. 10 consecutive C2H2-type zinc fingers follow at residues 284–306, 312–334, 340–362, 368–390, 396–418, 424–446, 452–474, 480–502, 508–530, and 536–558; these read YMCS…QRTH, YVCN…QRTH, YICS…QRTH, YICS…QRSH, YICN…QRTH, YECN…ERCH, FVCT…QRIH, YECN…QRTH, and YGCS…KKMH.

This sequence belongs to the krueppel C2H2-type zinc-finger protein family.

It is found in the nucleus. Its function is as follows. May be involved in transcriptional regulation. The chain is Zinc finger protein 614 (ZNF614) from Macaca fascicularis (Crab-eating macaque).